A 282-amino-acid chain; its full sequence is Ribosomal RNA small subunit methyltransferase A (282 aa).

The tract at residues 1–21 is disordered; sequence MPDFPKEHATPMSNRPPAHQA. Residues asparagine 28, leucine 30, glycine 55, glutamate 76, aspartate 101, and asparagine 126 each coordinate S-adenosyl-L-methionine.

This sequence belongs to the class I-like SAM-binding methyltransferase superfamily. rRNA adenine N(6)-methyltransferase family. RsmA subfamily.

Its subcellular location is the cytoplasm. The catalysed reaction is adenosine(1518)/adenosine(1519) in 16S rRNA + 4 S-adenosyl-L-methionine = N(6)-dimethyladenosine(1518)/N(6)-dimethyladenosine(1519) in 16S rRNA + 4 S-adenosyl-L-homocysteine + 4 H(+). In terms of biological role, specifically dimethylates two adjacent adenosines (A1518 and A1519) in the loop of a conserved hairpin near the 3'-end of 16S rRNA in the 30S particle. May play a critical role in biogenesis of 30S subunits. The chain is Ribosomal RNA small subunit methyltransferase A from Chromohalobacter salexigens (strain ATCC BAA-138 / DSM 3043 / CIP 106854 / NCIMB 13768 / 1H11).